The following is a 358-amino-acid chain: Phenylalanine--tRNA ligase alpha subunit (358 aa).

Mg(2+) is bound at residue glutamate 258.

It belongs to the class-II aminoacyl-tRNA synthetase family. Phe-tRNA synthetase alpha subunit type 1 subfamily. As to quaternary structure, tetramer of two alpha and two beta subunits. Mg(2+) serves as cofactor.

It localises to the cytoplasm. The enzyme catalyses tRNA(Phe) + L-phenylalanine + ATP = L-phenylalanyl-tRNA(Phe) + AMP + diphosphate + H(+). In Rhodospirillum rubrum (strain ATCC 11170 / ATH 1.1.1 / DSM 467 / LMG 4362 / NCIMB 8255 / S1), this protein is Phenylalanine--tRNA ligase alpha subunit.